Reading from the N-terminus, the 1447-residue chain is DNA-directed RNA polymerase subunit beta' (1447 aa).

Cys-70, Cys-72, Cys-85, and Cys-88 together coordinate Zn(2+). Mg(2+) contacts are provided by Asp-460, Asp-462, and Asp-464. 4 residues coordinate Zn(2+): Cys-890, Cys-964, Cys-971, and Cys-974.

It belongs to the RNA polymerase beta' chain family. The RNAP catalytic core consists of 2 alpha, 1 beta, 1 beta' and 1 omega subunit. When a sigma factor is associated with the core the holoenzyme is formed, which can initiate transcription. Requires Mg(2+) as cofactor. It depends on Zn(2+) as a cofactor.

The catalysed reaction is RNA(n) + a ribonucleoside 5'-triphosphate = RNA(n+1) + diphosphate. Its function is as follows. DNA-dependent RNA polymerase catalyzes the transcription of DNA into RNA using the four ribonucleoside triphosphates as substrates. In Desulfosudis oleivorans (strain DSM 6200 / JCM 39069 / Hxd3) (Desulfococcus oleovorans), this protein is DNA-directed RNA polymerase subunit beta'.